Reading from the N-terminus, the 238-residue chain is Tetrahydromethanopterin S-methyltransferase subunit A 1 (238 aa).

Residues 2–218 (VEKKSPAEGW…RMFAGMYSGK (217 aa)) are Cytoplasmic-facing. Histidine 84 contacts 5-hydroxybenzimidazolylcob(I)amide. The chain crosses the membrane as a helical span at residues 219 to 237 (VQGIMIGLAFTLTLGILLL). A topological domain (extracellular) is located at residue valine 238.

It belongs to the MtrA family. The complex is composed of 8 subunits; MtrA, MtrB, MtrC, MtrD, MtrE, MtrF, MtrG and MtrH. 5-hydroxybenzimidazolylcob(I)amide serves as cofactor.

It localises to the cell membrane. The catalysed reaction is 5-methyl-5,6,7,8-tetrahydromethanopterin + coenzyme M + 2 Na(+)(in) = 5,6,7,8-tetrahydromethanopterin + methyl-coenzyme M + 2 Na(+)(out). It participates in one-carbon metabolism; methanogenesis from CO(2); methyl-coenzyme M from 5,10-methylene-5,6,7,8-tetrahydromethanopterin: step 2/2. Its function is as follows. Part of a complex that catalyzes the formation of methyl-coenzyme M and tetrahydromethanopterin from coenzyme M and methyl-tetrahydromethanopterin. This is an energy-conserving, sodium-ion translocating step. The sequence is that of Tetrahydromethanopterin S-methyltransferase subunit A 1 from Methanothermobacter marburgensis (strain ATCC BAA-927 / DSM 2133 / JCM 14651 / NBRC 100331 / OCM 82 / Marburg) (Methanobacterium thermoautotrophicum).